The primary structure comprises 379 residues: 23S rRNA (uracil(747)-C(5))-methyltransferase RlmC (379 aa).

[4Fe-4S] cluster is bound by residues Cys-3, Cys-11, Cys-14, and Cys-86. Gln-211, Phe-240, Glu-262, and Asn-310 together coordinate S-adenosyl-L-methionine. Cys-337 functions as the Nucleophile in the catalytic mechanism.

This sequence belongs to the class I-like SAM-binding methyltransferase superfamily. RNA M5U methyltransferase family. RlmC subfamily.

It carries out the reaction uridine(747) in 23S rRNA + S-adenosyl-L-methionine = 5-methyluridine(747) in 23S rRNA + S-adenosyl-L-homocysteine + H(+). Catalyzes the formation of 5-methyl-uridine at position 747 (m5U747) in 23S rRNA. The chain is 23S rRNA (uracil(747)-C(5))-methyltransferase RlmC from Halothiobacillus neapolitanus (strain ATCC 23641 / c2) (Thiobacillus neapolitanus).